Reading from the N-terminus, the 329-residue chain is DNA-directed RNA polymerase subunit alpha (329 aa).

An alpha N-terminal domain (alpha-NTD) region spans residues 1 to 235 (MQGSVTEFLK…EQLDAFVDLR (235 aa)). The interval 249–329 (FDPILLRPVD…NWPPASIAED (81 aa)) is alpha C-terminal domain (alpha-CTD).

The protein belongs to the RNA polymerase alpha chain family. In terms of assembly, homodimer. The RNAP catalytic core consists of 2 alpha, 1 beta, 1 beta' and 1 omega subunit. When a sigma factor is associated with the core the holoenzyme is formed, which can initiate transcription.

The enzyme catalyses RNA(n) + a ribonucleoside 5'-triphosphate = RNA(n+1) + diphosphate. In terms of biological role, DNA-dependent RNA polymerase catalyzes the transcription of DNA into RNA using the four ribonucleoside triphosphates as substrates. The polypeptide is DNA-directed RNA polymerase subunit alpha (Aliivibrio fischeri (strain ATCC 700601 / ES114) (Vibrio fischeri)).